The sequence spans 155 residues: Cytochrome c-type biogenesis protein CcmE (155 aa).

The Cytoplasmic portion of the chain corresponds to 1–8 (MNPRRKKR). A helical; Signal-anchor for type II membrane protein membrane pass occupies residues 9–29 (LLITSLLAVALSLAVGLVLFA). Residues 30–155 (LQQNIDLFYT…GMDNFKANNK (126 aa)) are Periplasmic-facing. 2 residues coordinate heme: His131 and Tyr135.

It belongs to the CcmE/CycJ family.

It is found in the cell inner membrane. Functionally, heme chaperone required for the biogenesis of c-type cytochromes. Transiently binds heme delivered by CcmC and transfers the heme to apo-cytochromes in a process facilitated by CcmF and CcmH. In Psychromonas ingrahamii (strain DSM 17664 / CCUG 51855 / 37), this protein is Cytochrome c-type biogenesis protein CcmE.